A 208-amino-acid chain; its full sequence is ATP-dependent Clp protease proteolytic subunit 1 (208 aa).

The active-site Nucleophile is serine 108. Histidine 133 is a catalytic residue.

Belongs to the peptidase S14 family. Fourteen ClpP subunits assemble into 2 heptameric rings which stack back to back to give a disk-like structure with a central cavity, resembling the structure of eukaryotic proteasomes.

Its subcellular location is the cytoplasm. The catalysed reaction is Hydrolysis of proteins to small peptides in the presence of ATP and magnesium. alpha-casein is the usual test substrate. In the absence of ATP, only oligopeptides shorter than five residues are hydrolyzed (such as succinyl-Leu-Tyr-|-NHMec, and Leu-Tyr-Leu-|-Tyr-Trp, in which cleavage of the -Tyr-|-Leu- and -Tyr-|-Trp bonds also occurs).. Functionally, cleaves peptides in various proteins in a process that requires ATP hydrolysis. Has a chymotrypsin-like activity. Plays a major role in the degradation of misfolded proteins. This is ATP-dependent Clp protease proteolytic subunit 1 from Corynebacterium glutamicum (strain ATCC 13032 / DSM 20300 / JCM 1318 / BCRC 11384 / CCUG 27702 / LMG 3730 / NBRC 12168 / NCIMB 10025 / NRRL B-2784 / 534).